A 688-amino-acid polypeptide reads, in one-letter code: Glycine--tRNA ligase beta subunit (688 aa).

It belongs to the class-II aminoacyl-tRNA synthetase family. In terms of assembly, tetramer of two alpha and two beta subunits.

The protein localises to the cytoplasm. The catalysed reaction is tRNA(Gly) + glycine + ATP = glycyl-tRNA(Gly) + AMP + diphosphate. This Listeria monocytogenes serotype 4a (strain HCC23) protein is Glycine--tRNA ligase beta subunit.